The following is a 209-amino-acid chain: Somatotropin (209 aa).

Residues 1-22 (MGQVFLLMPVLLVAGYLSLGAA) form the signal peptide. H38 lines the Zn(2+) pocket. The cysteines at positions 71 and 182 are disulfide-linked. E191 lines the Zn(2+) pocket. An intrachain disulfide couples C199 to C207.

Belongs to the somatotropin/prolactin family.

Its subcellular location is the secreted. Growth hormone plays an important role in growth control and is involved in the regulation of several anabolic processes. Implicated as an osmoregulatory substance important for seawater adaptation. The protein is Somatotropin (gh) of Esox lucius (Northern pike).